The primary structure comprises 303 residues: Aspartate carbamoyltransferase catalytic subunit (303 aa).

Residues Arg51 and Thr52 each contribute to the carbamoyl phosphate site. Lys80 contacts L-aspartate. Carbamoyl phosphate-binding residues include Arg101, His129, and Gln132. Residues Arg162 and Arg221 each coordinate L-aspartate. Carbamoyl phosphate-binding residues include Leu260 and Pro261.

It belongs to the aspartate/ornithine carbamoyltransferase superfamily. ATCase family. In terms of assembly, heterooligomer of catalytic and regulatory chains.

It catalyses the reaction carbamoyl phosphate + L-aspartate = N-carbamoyl-L-aspartate + phosphate + H(+). It functions in the pathway pyrimidine metabolism; UMP biosynthesis via de novo pathway; (S)-dihydroorotate from bicarbonate: step 2/3. Functionally, catalyzes the condensation of carbamoyl phosphate and aspartate to form carbamoyl aspartate and inorganic phosphate, the committed step in the de novo pyrimidine nucleotide biosynthesis pathway. The chain is Aspartate carbamoyltransferase catalytic subunit from Saccharolobus islandicus (strain M.16.27) (Sulfolobus islandicus).